We begin with the raw amino-acid sequence, 365 residues long: Delta(7)-sterol 5(6)-desaturase ERG3 (365 aa).

At 1–92 (MDLVLEVADH…LLPRSSILRE (92 aa)) the chain is on the cytoplasmic side. The chain crosses the membrane as a helical span at residues 93-113 (FLSLWVIVTIFGLLLYLFTAS). Residues 114–140 (LSYVFVFDKSIFNHPRYLKNQMAMEIK) are Lumenal-facing. Residues 141–161 (LAVSAIPWMSMLTVPWFVMEL) form a helical membrane-spanning segment. Topologically, residues 162–242 (NGHSKLYMKI…VDGFLQSISY (81 aa)) are cytoplasmic. One can recognise a Fatty acid hydroxylase domain in the interval 187–311 (TFIFFTDCGV…FTTLWDRLGG (125 aa)). The Histidine box-1 motif lies at 200–204 (HRWLH). Positions 213–217 (HKPHH) match the Histidine box-2 motif. A helical transmembrane segment spans residues 243–263 (HIYPLILPLHKVSYLILFTFV). Topologically, residues 264–365 (NFWTVMIHDG…ENDPNTKKNN (102 aa)) are lumenal. The Histidine box-3 motif lies at 288–292 (HTVHH). Residues Lys324 and Lys344 each participate in a glycyl lysine isopeptide (Lys-Gly) (interchain with G-Cter in ubiquitin) cross-link.

It belongs to the sterol desaturase family. As to quaternary structure, interacts with ERG28. It depends on Fe cation as a cofactor.

It localises to the endoplasmic reticulum membrane. The catalysed reaction is episterol + 2 Fe(II)-[cytochrome b5] + O2 + 2 H(+) = 5-dehydroepisterol + 2 Fe(III)-[cytochrome b5] + 2 H2O. It participates in steroid metabolism; ergosterol biosynthesis; ergosterol from zymosterol: step 3/5. C-5 sterol desaturase; part of the third module of ergosterol biosynthesis pathway that includes the late steps of the pathway. ERG3 catalyzes the introduction of a C-5 double bond in the B ring to produce 5-dehydroepisterol. The third module or late pathway involves the ergosterol synthesis itself through consecutive reactions that mainly occur in the endoplasmic reticulum (ER) membrane. Firstly, the squalene synthase ERG9 catalyzes the condensation of 2 farnesyl pyrophosphate moieties to form squalene, which is the precursor of all steroids. Squalene synthase is crucial for balancing the incorporation of farnesyl diphosphate (FPP) into sterol and nonsterol isoprene synthesis. Secondly, the squalene epoxidase ERG1 catalyzes the stereospecific oxidation of squalene to (S)-2,3-epoxysqualene, which is considered to be a rate-limiting enzyme in steroid biosynthesis. Then, the lanosterol synthase ERG7 catalyzes the cyclization of (S)-2,3 oxidosqualene to lanosterol, a reaction that forms the sterol core. In the next steps, lanosterol is transformed to zymosterol through a complex process involving various demethylation, reduction and desaturation reactions. The lanosterol 14-alpha-demethylase ERG11 (also known as CYP51) catalyzes C14-demethylation of lanosterol to produce 4,4'-dimethyl cholesta-8,14,24-triene-3-beta-ol, which is critical for ergosterol biosynthesis. The C-14 reductase ERG24 reduces the C14=C15 double bond of 4,4-dimethyl-cholesta-8,14,24-trienol to produce 4,4-dimethyl-cholesta-8,24-dienol. 4,4-dimethyl-cholesta-8,24-dienol is substrate of the C-4 demethylation complex ERG25-ERG26-ERG27 in which ERG25 catalyzes the three-step monooxygenation required for the demethylation of 4,4-dimethyl and 4alpha-methylsterols, ERG26 catalyzes the oxidative decarboxylation that results in a reduction of the 3-beta-hydroxy group at the C-3 carbon to an oxo group, and ERG27 is responsible for the reduction of the keto group on the C-3. ERG28 has a role as a scaffold to help anchor ERG25, ERG26 and ERG27 to the endoplasmic reticulum and ERG29 regulates the activity of the iron-containing C4-methylsterol oxidase ERG25. Then, the sterol 24-C-methyltransferase ERG6 catalyzes the methyl transfer from S-adenosyl-methionine to the C-24 of zymosterol to form fecosterol. The C-8 sterol isomerase ERG2 catalyzes the reaction which results in unsaturation at C-7 in the B ring of sterols and thus converts fecosterol to episterol. The sterol-C5-desaturase ERG3 then catalyzes the introduction of a C-5 double bond in the B ring to produce 5-dehydroepisterol. The C-22 sterol desaturase ERG5 further converts 5-dehydroepisterol into ergosta-5,7,22,24(28)-tetraen-3beta-ol by forming the C-22(23) double bond in the sterol side chain. Finally, ergosta-5,7,22,24(28)-tetraen-3beta-ol is substrate of the C-24(28) sterol reductase ERG4 to produce ergosterol. The sequence is that of Delta(7)-sterol 5(6)-desaturase ERG3 from Saccharomyces cerevisiae (strain ATCC 204508 / S288c) (Baker's yeast).